Here is a 179-residue protein sequence, read N- to C-terminus: Large ribosomal subunit protein uL5 (179 aa).

This sequence belongs to the universal ribosomal protein uL5 family. In terms of assembly, part of the 50S ribosomal subunit; part of the 5S rRNA/L5/L18/L25 subcomplex. Contacts the 5S rRNA and the P site tRNA. Forms a bridge to the 30S subunit in the 70S ribosome.

This is one of the proteins that bind and probably mediate the attachment of the 5S RNA into the large ribosomal subunit, where it forms part of the central protuberance. In the 70S ribosome it contacts protein S13 of the 30S subunit (bridge B1b), connecting the 2 subunits; this bridge is implicated in subunit movement. Contacts the P site tRNA; the 5S rRNA and some of its associated proteins might help stabilize positioning of ribosome-bound tRNAs. This is Large ribosomal subunit protein uL5 from Pseudomonas aeruginosa (strain LESB58).